The following is a 283-amino-acid chain: MNSNRCQTNEVNKFISSTEKGPFTGRDNTLSFNKIGSRLNSPPILKDKIELKFLQHSEDLNQSRSYVNIRPRTLEDQSYKFEAPNLNDNETSWAKDFRYNFPKNVEPPIENQIANLNINNGLRTSQTDFPLGFYSQKNFNIASFPVVDHQIFKTTGLEHPINSHIDSLINAEFSELEASSLEEDVHTEEENSGTSLEDEETAMKGLASDIIEFCDNNSANKDVKERLNSSKFMGLMGSISDGSIVLKKDNGTERNLQKHVGFCFQNSGNWAGLEFHDVEDRIA.

Residues 179-201 (SSLEEDVHTEEENSGTSLEDEET) are disordered. Over residues 180-200 (SLEEDVHTEEENSGTSLEDEE) the composition is skewed to acidic residues.

In terms of assembly, interacts with PEX7; The interaction with PEX7 stabilizes PEX18. Interacts with PEX13. Ubiquitinated in a UBC4/UBC5 dependent manner.

The protein localises to the cytoplasm. The protein resides in the peroxisome membrane. Its function is as follows. Involved in peroxisome biogenesis and the import of peroxisomal matrix proteins that contain the peroxisomal targeting sequence PTS2. Required for peroxisomal targeting of PEX7 and growth on oleate. The chain is Peroxisomal membrane protein PEX18 (PEX18) from Saccharomyces cerevisiae (strain ATCC 204508 / S288c) (Baker's yeast).